We begin with the raw amino-acid sequence, 1247 residues long: Protein jagged-2 (1247 aa).

An N-terminal signal peptide occupies residues 1–23; sequence MRARGWGRLPRRLLLLLVLCVQA. The Extracellular portion of the chain corresponds to 24 to 1082; it reads TRPMGYFELQ…ETVVMGGSST (1059 aa). The N-linked (GlcNAc...) asparagine glycan is linked to N153. The region spanning 196-240 is the DSL domain; it reads VRCDENYYSATCNKFCRPRNDFFGHYTCDQYGNKACMDGWMGKEC. Disulfide bonds link C198/C207, C211/C223, C231/C240, C245/C256, C249/C262, C264/C273, C276/C287, C282/C293, C295/C304, C311/C323, C317/C333, C335/C344, C351/C362, C356/C371, C373/C382, C389/C400, C394/C409, C411/C420, C427/C438, C432/C447, C449/C458, C465/C475, C469/C484, C486/C495, C502/C513, C507/C522, C524/C533, C540/C551, C545/C560, C562/C571, C589/C612, C606/C622, C624/C633, C640/C651, C645/C660, C662/C671, C678/C689, C683/C698, C700/C709, C716/C727, C721/C736, and C738/C747. Residues 241-274 form the EGF-like 1 domain; the sequence is KEAVCKQGCNLLHGGCTVPGECRCSYGWQGKFCD. The EGF-like 2; atypical domain occupies 275-305; it reads ECVPYPGCVHGSCVEPWHCDCETNWGGLLCD. 2 EGF-like domains span residues 307–345 and 347–383; these read DLNYCGSHHPCVNGGTCINAEPDQYLCACPDGYLGKNCE and AEHACASNPCANGGSCHEVPSGFECHCPSGWNGPTCA. The region spanning 385–421 is the EGF-like 5; calcium-binding domain; it reads DIDECASNPCAAGGTCVDQVDGFECICPEQWVGATCQ. One can recognise an EGF-like 6; calcium-binding domain in the interval 423-459; that stretch reads DANECEGKPCLNAFSCKNLIGGYYCDCLPGWKGINCQ. Residues 461-496 form the EGF-like 7; calcium-binding domain; that stretch reads NINDCHGQCQHGGTCKDLVNGYQCVCPRGFGGRHCE. EGF-like domains are found at residues 498 to 534 and 536 to 572; these read EYDKCASSPCRRGGICEDLVDGFRCHCPRGLSGLHCE and DMDLCEPSPCLNGARCYNLEGDYYCACPEDFGGKNCS. A glycan (N-linked (GlcNAc...) asparagine) is linked at N570. One can recognise an EGF-like 10; atypical domain in the interval 574–634; the sequence is PRDTCPGGAC…DSGFTGTYCH (61 aa). N619 is a glycosylation site (N-linked (GlcNAc...) asparagine). One can recognise an EGF-like 11; calcium-binding domain in the interval 636–672; the sequence is NIDDCMGQPCRNGGTCIDEVDSFRCFCPSGWEGELCD. The EGF-like 12; calcium-binding domain maps to 674 to 710; sequence NPNDCLPDPCHSRGRCYDLVNDFYCACDDGWKGKTCH. 2 EGF-like domains span residues 712 to 748 and 751 to 787; these read REFQCDAYTCSNGGTCYDSGDTFRCACPPGWKGSTCT and KNSSCVPNPCVNGGTCVGSGDSFSCICRDGWEGRTCT. Residue N752 is glycosylated (N-linked (GlcNAc...) asparagine). Disulfide bonds link C755–C766, C760–C775, C777–C786, C793–C804, C798–C813, C815–C824, C831–C842, C836–C851, and C853–C862. The EGF-like 15; calcium-binding domain maps to 789 to 825; the sequence is NTNDCNPLPCYNGGICVDGVNWFRCECAPGFAGPDCR. The EGF-like 16; calcium-binding domain maps to 827 to 863; it reads NIDECQSSPCAYGATCVDEINGYRCSCPPGRSGPRCQ. N-linked (GlcNAc...) asparagine glycosylation occurs at N1060. A helical membrane pass occupies residues 1083–1103; it reads GLLVPVLCSVFSVLWLACVVI. Residues 1104 to 1247 lie on the Cytoplasmic side of the membrane; it reads CVWWTRKRRK…TKDVRRAGRE (144 aa). 3 stretches are compositionally biased toward basic and acidic residues: residues 1115 to 1125, 1192 to 1212, and 1230 to 1247; these read RERSRLPRDES, LSRGDGDSPEAEKFISHKFTK, and VDNRAVRSTKDVRRAGRE. Disordered regions lie at residues 1115 to 1148 and 1167 to 1247; these read RERSRLPRDESANNQWAPLNPIRNPIERPGGSGL and PRRA…AGRE. S1125 carries the post-translational modification Phosphoserine.

In terms of tissue distribution, found to be highest in fetal thymus, epidermis, foregut dorsal root ganglia and inner ear. In 2-weeK-old mice, abundant in heart, lung, thymus, skeletal muscle, brain and testis. Expression overlaps partially with Notch1 expression.

Its subcellular location is the membrane. Its function is as follows. Putative Notch ligand involved in the mediation of Notch signaling. Plays an essential role during limb, craniofacial and thymic development. May be involved in myogenesis and in the development of peripheral and central nervous systems. The protein is Protein jagged-2 (Jag2) of Mus musculus (Mouse).